Reading from the N-terminus, the 259-residue chain is Triosephosphate isomerase (259 aa).

A substrate-binding site is contributed by 10-12; sequence NWK. Residue His100 is the Electrophile of the active site. Glu172 functions as the Proton acceptor in the catalytic mechanism. Residues Gly178, Ser218, and 239 to 240 each bind substrate; that span reads GG.

It belongs to the triosephosphate isomerase family. As to quaternary structure, homodimer.

The protein resides in the cytoplasm. It carries out the reaction D-glyceraldehyde 3-phosphate = dihydroxyacetone phosphate. The protein operates within carbohydrate biosynthesis; gluconeogenesis. Its pathway is carbohydrate degradation; glycolysis; D-glyceraldehyde 3-phosphate from glycerone phosphate: step 1/1. Involved in the gluconeogenesis. Catalyzes stereospecifically the conversion of dihydroxyacetone phosphate (DHAP) to D-glyceraldehyde-3-phosphate (G3P). The chain is Triosephosphate isomerase from Corynebacterium glutamicum (strain ATCC 13032 / DSM 20300 / JCM 1318 / BCRC 11384 / CCUG 27702 / LMG 3730 / NBRC 12168 / NCIMB 10025 / NRRL B-2784 / 534).